The sequence spans 331 residues: MNSAPKLNTFQHLIGEHQTFLEAKRIAKQFSLSELPVLITGKIGTGKNHFAHAIHLESSRSNEPFISVNCSTHSEETLIHELFGPNGNTGVFQKAVRGTLFLDDVWRMPASVQAQLLKALDSDTEKPRMICASADRSVEHTFRQDLFYRLNILTLTLPELSERKSDIPLLTQHFLSNSGQQLLIDPSVFPVLEKHAFEGNVRELKNAADYMAAVSSGGTIQPYDLPPYIRGTIDGKTSKKKAKLLTLMEKAEFLFILETIKVLNEKGEPASRRIISEHSKNTQTSLTPQQVRSRLDYLEKKDYVTKSRGRAGTKITFEGLSFIETLKNQMI.

The Sigma-54 factor interaction domain maps to 12 to 213; the sequence is HLIGEHQTFL…LKNAADYMAA (202 aa). Residue 95–104 coordinates ATP; sequence AVRGTLFLDD.

In terms of biological role, may play a role in cold adaptation. The sequence is that of Putative sigma L-dependent transcriptional regulator YplP (yplP) from Bacillus subtilis (strain 168).